A 791-amino-acid polypeptide reads, in one-letter code: Subtilisin-like protease SBT5.6 (791 aa).

Residues 1-20 (MKKLTSLFPLLFLIPLLASC) form the signal peptide. Residues 21–108 (AEEKQVYIVY…KSHPRKYEAH (88 aa)) constitute a propeptide, activation peptide. The 79-residue stretch at 26–104 (VYIVYFGEHK…VSVFKSHPRK (79 aa)) folds into the Inhibitor I9 domain. The region spanning 134-645 (ADDRFRVGRN…SGHFRPTKAA (512 aa)) is the Peptidase S8 domain. D160 (charge relay system) is an active-site residue. 2 N-linked (GlcNAc...) asparagine glycosylation sites follow: N193 and N219. H235 functions as the Charge relay system in the catalytic mechanism. Positions 400–494 (FAPLVYASNV…VTPTVVDKIL (95 aa)) constitute a PA domain. N-linked (GlcNAc...) asparagine glycosylation occurs at N417. S578 functions as the Charge relay system in the catalytic mechanism. Residues N666, N713, and N761 are each glycosylated (N-linked (GlcNAc...) asparagine).

Belongs to the peptidase S8 family.

It is found in the secreted. The chain is Subtilisin-like protease SBT5.6 from Arabidopsis thaliana (Mouse-ear cress).